The following is a 142-amino-acid chain: Large ribosomal subunit protein uL13 (142 aa).

The protein belongs to the universal ribosomal protein uL13 family. In terms of assembly, part of the 50S ribosomal subunit.

Its function is as follows. This protein is one of the early assembly proteins of the 50S ribosomal subunit, although it is not seen to bind rRNA by itself. It is important during the early stages of 50S assembly. The protein is Large ribosomal subunit protein uL13 of Chromobacterium violaceum (strain ATCC 12472 / DSM 30191 / JCM 1249 / CCUG 213 / NBRC 12614 / NCIMB 9131 / NCTC 9757 / MK).